A 450-amino-acid polypeptide reads, in one-letter code: tRNA-2-methylthio-N(6)-dimethylallyladenosine synthase (450 aa).

The MTTase N-terminal domain maps to 7-127 (KKVFIKTYGC…LPDVLARVRG (121 aa)). 6 residues coordinate [4Fe-4S] cluster: cysteine 16, cysteine 52, cysteine 90, cysteine 168, cysteine 172, and cysteine 175. One can recognise a Radical SAM core domain in the interval 154 to 388 (IKRGVTAFLT…LLLKQQQGFG (235 aa)). Residues 389 to 450 (SSLVGSTIDT…GYNSLFAELA (62 aa)) form the TRAM domain.

The protein belongs to the methylthiotransferase family. MiaB subfamily. As to quaternary structure, monomer. [4Fe-4S] cluster serves as cofactor.

It is found in the cytoplasm. It catalyses the reaction N(6)-dimethylallyladenosine(37) in tRNA + (sulfur carrier)-SH + AH2 + 2 S-adenosyl-L-methionine = 2-methylsulfanyl-N(6)-dimethylallyladenosine(37) in tRNA + (sulfur carrier)-H + 5'-deoxyadenosine + L-methionine + A + S-adenosyl-L-homocysteine + 2 H(+). In terms of biological role, catalyzes the methylthiolation of N6-(dimethylallyl)adenosine (i(6)A), leading to the formation of 2-methylthio-N6-(dimethylallyl)adenosine (ms(2)i(6)A) at position 37 in tRNAs that read codons beginning with uridine. The sequence is that of tRNA-2-methylthio-N(6)-dimethylallyladenosine synthase from Mesorhizobium japonicum (strain LMG 29417 / CECT 9101 / MAFF 303099) (Mesorhizobium loti (strain MAFF 303099)).